The following is a 778-amino-acid chain: Endonuclease MutS2 (778 aa).

Gly-329–Thr-336 provides a ligand contact to ATP. The Smr domain occupies Leu-703 to Lys-778.

It belongs to the DNA mismatch repair MutS family. MutS2 subfamily. In terms of assembly, homodimer. Binds to stalled ribosomes, contacting rRNA.

Its function is as follows. Endonuclease that is involved in the suppression of homologous recombination and thus may have a key role in the control of bacterial genetic diversity. In terms of biological role, acts as a ribosome collision sensor, splitting the ribosome into its 2 subunits. Detects stalled/collided 70S ribosomes which it binds and splits by an ATP-hydrolysis driven conformational change. Acts upstream of the ribosome quality control system (RQC), a ribosome-associated complex that mediates the extraction of incompletely synthesized nascent chains from stalled ribosomes and their subsequent degradation. Probably generates substrates for RQC. This Streptococcus suis (strain 98HAH33) protein is Endonuclease MutS2.